A 200-amino-acid polypeptide reads, in one-letter code: Large ribosomal subunit protein uL4 (200 aa).

A disordered region spans residues 42 to 65; the sequence is TRAQKTRSEVSGGGAKPWRQKGTG.

This sequence belongs to the universal ribosomal protein uL4 family. In terms of assembly, part of the 50S ribosomal subunit.

Functionally, one of the primary rRNA binding proteins, this protein initially binds near the 5'-end of the 23S rRNA. It is important during the early stages of 50S assembly. It makes multiple contacts with different domains of the 23S rRNA in the assembled 50S subunit and ribosome. Forms part of the polypeptide exit tunnel. The sequence is that of Large ribosomal subunit protein uL4 from Vibrio parahaemolyticus serotype O3:K6 (strain RIMD 2210633).